The following is a 309-amino-acid chain: Ribonuclease Z (309 aa).

The Zn(2+) site is built by H64, H66, D68, H69, H141, D209, and H267. D68 functions as the Proton acceptor in the catalytic mechanism.

This sequence belongs to the RNase Z family. Homodimer. Zn(2+) serves as cofactor.

It catalyses the reaction Endonucleolytic cleavage of RNA, removing extra 3' nucleotides from tRNA precursor, generating 3' termini of tRNAs. A 3'-hydroxy group is left at the tRNA terminus and a 5'-phosphoryl group is left at the trailer molecule.. In terms of biological role, zinc phosphodiesterase, which displays some tRNA 3'-processing endonuclease activity. Probably involved in tRNA maturation, by removing a 3'-trailer from precursor tRNA. This Picrophilus torridus (strain ATCC 700027 / DSM 9790 / JCM 10055 / NBRC 100828 / KAW 2/3) protein is Ribonuclease Z.